A 179-amino-acid chain; its full sequence is ATP-dependent protease subunit HslV (179 aa).

Threonine 7 is a catalytic residue. The Na(+) site is built by glycine 162, cysteine 165, and threonine 168.

The protein belongs to the peptidase T1B family. HslV subfamily. In terms of assembly, a double ring-shaped homohexamer of HslV is capped on each side by a ring-shaped HslU homohexamer. The assembly of the HslU/HslV complex is dependent on binding of ATP.

Its subcellular location is the cytoplasm. The enzyme catalyses ATP-dependent cleavage of peptide bonds with broad specificity.. Its activity is regulated as follows. Allosterically activated by HslU binding. Protease subunit of a proteasome-like degradation complex believed to be a general protein degrading machinery. In Bordetella pertussis (strain Tohama I / ATCC BAA-589 / NCTC 13251), this protein is ATP-dependent protease subunit HslV.